Here is a 243-residue protein sequence, read N- to C-terminus: UPF0758 protein sll0766 (243 aa).

An MPN domain is found at 113 to 235 (VVDSPEAAAI…HQSLRQCTDL (123 aa)). Residues His184, His186, and Asp197 each contribute to the Zn(2+) site. Residues 184–197 (HNHPSGGLEPSPED) carry the JAMM motif motif.

It belongs to the UPF0758 family.

This Synechocystis sp. (strain ATCC 27184 / PCC 6803 / Kazusa) protein is UPF0758 protein sll0766.